A 47-amino-acid chain; its full sequence is Large ribosomal subunit protein bL34 (47 aa).

It belongs to the bacterial ribosomal protein bL34 family.

In Mycobacterium avium (strain 104), this protein is Large ribosomal subunit protein bL34.